Reading from the N-terminus, the 89-residue chain is Small ribosomal subunit protein uS19 (89 aa).

The protein belongs to the universal ribosomal protein uS19 family.

Its function is as follows. Protein S19 forms a complex with S13 that binds strongly to the 16S ribosomal RNA. The sequence is that of Small ribosomal subunit protein uS19 from Azobacteroides pseudotrichonymphae genomovar. CFP2.